Here is a 374-residue protein sequence, read N- to C-terminus: CC-adding tRNA nucleotidyltransferase (374 aa).

CTP is bound at residue 39–42 (GAVR). The Mg(2+) site is built by aspartate 52 and aspartate 54. Residues 126 to 127 (RD), asparagine 131, 171 to 180 (DASRLVRAAR), and arginine 209 contribute to the CTP site.

This sequence belongs to the tRNA nucleotidyltransferase/poly(A) polymerase family. The cofactor is Mg(2+).

It carries out the reaction a tRNA precursor + 2 CTP = a tRNA with a 3' CC end + 2 diphosphate. Functionally, tRNA nucleotidyltransferase involved in the synthesis of the tRNA CCA terminus. Adds the two cytidine residues to tRNA. The polypeptide is CC-adding tRNA nucleotidyltransferase (Deinococcus radiodurans (strain ATCC 13939 / DSM 20539 / JCM 16871 / CCUG 27074 / LMG 4051 / NBRC 15346 / NCIMB 9279 / VKM B-1422 / R1)).